The following is a 69-amino-acid chain: uncharacterized protein (69 aa).

Disordered regions lie at residues 1–32 (MSAP…GWGD) and 44–69 (QSDA…APSD). Basic and acidic residues-rich tracts occupy residues 7–32 (NLDR…GWGD) and 46–69 (DADK…APSD).

This is an uncharacterized protein from Schizosaccharomyces pombe (strain 972 / ATCC 24843) (Fission yeast).